The chain runs to 1016 residues: EMILIN-1 (1016 aa).

An N-terminal signal peptide occupies residues 1–21 (MAPRTLWSCYLCCLLTAAAGA). Residues 56–131 (HRNWCAYVVT…QGYGGDDCAE (76 aa)) form the EMI domain. Cystine bridges form between cysteine 60/cysteine 121, cysteine 85/cysteine 92, and cysteine 120/cysteine 129. Residues 135–182 (PALGPASSTPRPLARPARPNLSGSSAGSPLSGLGGEGPGESEKVQQLE) are disordered. The span at 139–165 (PASSTPRPLARPARPNLSGSSAGSPLS) shows a compositional bias: low complexity. The N-linked (GlcNAc...) asparagine glycan is linked to asparagine 154. Residues 216 to 256 (TAFNGRQQPADAAARPGVHETLNEIQHQLQLLDTRVSTHDQ) adopt a coiled-coil conformation. 2 disordered regions span residues 257-288 (ELGH…GPSE) and 383-402 (RGTE…GYTS). A compositionally biased stretch (low complexity) spans 266-279 (GGSSSSGGSRAPAP). Positions 356–420 (PELGRRLAEL…EDRFNSTLGP (65 aa)) form a coiled coil. The span at 386–397 (ELGGAAGQGGHP) shows a compositional bias: gly residues. Asparagine 415 is a glycosylation site (N-linked (GlcNAc...) asparagine). Residues 416–435 (STLGPSEEQEESWPGAPGGL) are disordered. N-linked (GlcNAc...) asparagine glycosylation is found at asparagine 455 and asparagine 561. Residues 576–603 (AHGDEGCGACGGVQEELGRLRDGVERCS) adopt a coiled-coil conformation. N-linked (GlcNAc...) asparagine glycosylation is present at asparagine 658. Residues 685 to 752 (IISEINRLQQ…GLQGLREGLS (68 aa)) adopt a coiled-coil conformation. N-linked (GlcNAc...) asparagine glycans are attached at residues asparagine 766 and asparagine 794. 2 disordered regions span residues 811–863 (DLTG…VEGA) and 942–961 (RVDS…VAES). Residues 814 to 864 (GPAGEAGPPGPPGLQGPPGPAGPPGSPGKDGQEGPIGPPGPQGEQGVEGAP) enclose the Collagen-like domain. Residues 821–839 (PPGPPGLQGPPGPAGPPGS) are compositionally biased toward pro residues. Residues 835-857 (GPPGSPGKDGQEGPIGPPGPQGE) are a coiled coil. The C1q domain maps to 866–1013 (APVPQVAFSA…GALLYGDPEL (148 aa)).

In terms of assembly, homotrimer associated through a moderately stable interaction of the C-terminal globular C1q domains, allowing the nucleation of the triple helix and then a further quaternary assembly to higher-order polymers via intermolecular disulfide bonds. Interacts with EMILIN2. Interacts with EFEMP2; this interaction promotes the incorporation of EFEMP2 into the extracellular matrix. In terms of tissue distribution, distributed in tissues where resilience and elastic recoil are prominent. Highest levels in the adult small intestine, aorta, lung, uterus, and appendix and in the fetal spleen, kidney, lung, and heart; intermediate expression was detected in adult liver, ovary, colon, stomach, lymph node and spleen; adult heart, bladder, prostate, adrenal gland, mammary gland, placenta and kidney showed low expression whereas a series of other adult tissues, including skeletal muscle and different regions of adult brain show no expression. Detected in intramuscular nerve bundles, where it particularly localizes in the epineurium, the most external layer of dense connective tissue enclosing the nerve.

It is found in the secreted. The protein resides in the extracellular space. Its subcellular location is the extracellular matrix. Its function is as follows. Involved in elastic and collagen fibers formation. It is required for EFEMP2 deposition into the extracellular matrix, and collagen network assembly and cross-linking via protein-lysine 6-oxidase/LOX activity. May be responsible for anchoring smooth muscle cells to elastic fibers, and may be involved in the processes that regulate vessel assembly. Has cell adhesive capacity. The chain is EMILIN-1 (EMILIN1) from Homo sapiens (Human).